We begin with the raw amino-acid sequence, 486 residues long: Coronin-1B (486 aa).

S2 bears the Phosphoserine; by PKC mark. WD repeat units follow at residues G80–P120, G130–R170, L174–E213, A217–A260, and D265–H305. The segment at L404 to A444 is disordered. The segment covering A432–A444 has biased composition (low complexity). Residues E446–G484 adopt a coiled-coil conformation.

The protein belongs to the WD repeat coronin family. Forms homooligomers, but does not form complexes with the other coronins. Interacts with Arp2/3 complex components, including ACTR2, ARPC1B and ARPC2. Binds actin. Post-translationally, phosphorylated in vivo by PKC in response to cholinergic stimulation. Phosphorylation on Ser-2 regulates the interaction with the Arp2/3 complex and cell motility in fibroblasts. Phosphorylation does not seem to affect subcellular location.

The protein resides in the cytoplasm. It is found in the cytoskeleton. It localises to the stress fiber. Functionally, regulates leading edge dynamics and cell motility in fibroblasts. May be involved in cytokinesis and signal transduction. In Oryctolagus cuniculus (Rabbit), this protein is Coronin-1B (CORO1B).